We begin with the raw amino-acid sequence, 146 residues long: Aminoglycoside N(6')-acetyltransferase type 1 (146 aa).

An N-acetyltransferase domain is found at 1–146 (MNIMPISESQ…RVVYFKKNIG (146 aa)). Positions 22, 25, 66, and 79 each coordinate substrate. Residue 81–83 (IFV) participates in acetyl-CoA binding. Asp115 lines the substrate pocket. Asn120 lines the acetyl-CoA pocket. Glu136 is a substrate binding site.

As to quaternary structure, homodimer.

It carries out the reaction kanamycin B + acetyl-CoA = N(6')-acetylkanamycin B + CoA + H(+). Functionally, catalyzes the transfer of an acetyl group from acetyl-CoA to the 6'-amino group of aminoglycoside molecules conferring resistance to antibiotics containing the purpurosamine ring including amikacin, kanamycin, tobramycin and netilmicin. This Acinetobacter baumannii protein is Aminoglycoside N(6')-acetyltransferase type 1.